Consider the following 106-residue polypeptide: Movement protein TGB2 (106 aa).

Topologically, residues 1 to 8 are cytoplasmic; the sequence is MPLTPPPD. Residues 9–29 traverse the membrane as a helical segment; it reads YTRVYTALAIGASIAFFTGLI. Over 30-73 the chain is Lumenal; that stretch reads TRNTLPSVGDLQHNLPHGGRYRDGTKSVEYCGPRKLNSVESGSR. Residues 74 to 94 form a helical membrane-spanning segment; sequence WTFQPWLLVIVLVALIIALGR. Residues 95–106 lie on the Cytoplasmic side of the membrane; that stretch reads QGHNCRACGRSH.

This sequence belongs to the Tymovirales TGBp2 protein family.

Its subcellular location is the host endoplasmic reticulum membrane. In terms of biological role, plays a role in viral cell-to-cell propagation, by facilitating genome transport to neighboring plant cells through plasmosdesmata,. In Lilium (LSV), this protein is Movement protein TGB2.